Consider the following 474-residue polypeptide: MTSNNLPTVLESIVEGRRGHLEEIRARIAHVDVDALPKSTRSLFDSLNQGRGGARFIMECKSASPSLGMIREHYQPGEIARVYSRYASGISVLCEPDRFGGDYDHLATVAATSHLPVLCKDFIIDPVQVHAARYFGADAILLMLSVLDDEEYAALAAEAARFDLDILTEVIDEEEVARAIKLGAKIFGVNHRNLHDLSIDLDRSRRLSKLIPADAVLVSESGVRDTETVRQLGGHSNAFLVGSQLTSQENVDLAARELVYGPNKVCGLTSPSAAQTARAAGAVYGGLIFEEASPRNVSRETLQKIIAAEPNLRYVAVSRRTSGYKDLLVDGIFAVQIHAPLQDSVEAEKALIAAVREEVGPQVQVWRAISMSSPLGAEVAAAVEGDVDKLILDAHEGGSGEVFDWATVPAAVKAKSLLAGGISPDNAAQALAVGCAGLDINSGVEYPAGAGTWAGAKDAGALLKIFATISTFHY.

The interval 1–262 is indole-3-glycerol phosphate synthase; sequence MTSNNLPTVL…LAARELVYGP (262 aa). The N-(5'-phosphoribosyl)anthranilate isomerase stretch occupies residues 263 to 474; that stretch reads NKVCGLTSPS…IFATISTFHY (212 aa).

It in the N-terminal section; belongs to the TrpC family. This sequence in the C-terminal section; belongs to the TrpF family. As to quaternary structure, monomer.

It catalyses the reaction N-(5-phospho-beta-D-ribosyl)anthranilate = 1-(2-carboxyphenylamino)-1-deoxy-D-ribulose 5-phosphate. It carries out the reaction 1-(2-carboxyphenylamino)-1-deoxy-D-ribulose 5-phosphate + H(+) = (1S,2R)-1-C-(indol-3-yl)glycerol 3-phosphate + CO2 + H2O. It functions in the pathway amino-acid biosynthesis; L-tryptophan biosynthesis; L-tryptophan from chorismate: step 3/5. Its pathway is amino-acid biosynthesis; L-tryptophan biosynthesis; L-tryptophan from chorismate: step 4/5. Its function is as follows. Bifunctional enzyme that catalyzes two sequential steps of tryptophan biosynthetic pathway. The first reaction is catalyzed by the isomerase, coded by the TrpF domain; the second reaction is catalyzed by the synthase, coded by the TrpC domain. This Corynebacterium glutamicum (strain ATCC 13032 / DSM 20300 / JCM 1318 / BCRC 11384 / CCUG 27702 / LMG 3730 / NBRC 12168 / NCIMB 10025 / NRRL B-2784 / 534) protein is Tryptophan biosynthesis protein TrpCF (trpC).